A 337-amino-acid chain; its full sequence is Anthranilate phosphoribosyltransferase (337 aa).

Residues G78, 81 to 82, T86, 88 to 91, 106 to 114, and S118 each bind 5-phospho-alpha-D-ribose 1-diphosphate; these read GD, NIST, and KHGNRSVSS. G78 provides a ligand contact to anthranilate. S90 contributes to the Mg(2+) binding site. N109 lines the anthranilate pocket. R164 contacts anthranilate. Mg(2+)-binding residues include D222 and E223.

The protein belongs to the anthranilate phosphoribosyltransferase family. In terms of assembly, homodimer. Requires Mg(2+) as cofactor.

The catalysed reaction is N-(5-phospho-beta-D-ribosyl)anthranilate + diphosphate = 5-phospho-alpha-D-ribose 1-diphosphate + anthranilate. It functions in the pathway amino-acid biosynthesis; L-tryptophan biosynthesis; L-tryptophan from chorismate: step 2/5. Functionally, catalyzes the transfer of the phosphoribosyl group of 5-phosphorylribose-1-pyrophosphate (PRPP) to anthranilate to yield N-(5'-phosphoribosyl)-anthranilate (PRA). This is Anthranilate phosphoribosyltransferase from Idiomarina loihiensis (strain ATCC BAA-735 / DSM 15497 / L2-TR).